The primary structure comprises 304 residues: GDP-6-deoxy-D-mannose reductase (304 aa).

NADP(+)-binding positions include 13 to 14 (FV) and 39 to 40 (DL). 105-106 (SG) is a binding site for substrate. An NADP(+)-binding site is contributed by Y131. Residues N160, R200, and 260–263 (RRAE) contribute to the substrate site.

Belongs to the NAD(P)-dependent epimerase/dehydratase family. GDP-6-deoxy-D-mannose reductase subfamily.

It catalyses the reaction GDP-alpha-D-rhamnose + NAD(+) = GDP-4-dehydro-alpha-D-rhamnose + NADH + H(+). The catalysed reaction is GDP-alpha-D-rhamnose + NADP(+) = GDP-4-dehydro-alpha-D-rhamnose + NADPH + H(+). Its function is as follows. Reductase that catalyzes the conversion of GDP-6-deoxy-D-mannose to GDP-4-dehydro-6-deoxy-D-mannose (GDP-D-rhamnose). The protein is GDP-6-deoxy-D-mannose reductase (rmd) of Pseudomonas aeruginosa (strain ATCC 15692 / DSM 22644 / CIP 104116 / JCM 14847 / LMG 12228 / 1C / PRS 101 / PAO1).